The chain runs to 130 residues: uncharacterized protein (130 aa).

This is an uncharacterized protein from Orgyia pseudotsugata multicapsid polyhedrosis virus (OpMNPV).